We begin with the raw amino-acid sequence, 544 residues long: Chromosomal replication initiator protein DnaA (544 aa).

Residues 1-71 form a domain I, interacts with DnaA modulators region; it reads MNDFWQHCSA…ADMARDFWHT (71 aa). The interval 71–207 is domain II; that stretch reads TPIDVQFVLD…GETDSMYERS (137 aa). A compositionally biased stretch (low complexity) spans 90–105; the sequence is AAAPAPASARPASAPG. Disordered stretches follow at residues 90 to 111 and 180 to 203; these read AAAPAPASARPASAPGSMGGSA and AAARRTWRPGQSAGSNGNGETDSM. Polar residues predominate over residues 191–200; sequence SAGSNGNGET. The interval 208 to 424 is domain III, AAA+ region; the sequence is KLNPVLTFDN…GALRKILAYS (217 aa). ATP is bound by residues G252, G254, K255, and T256. Residues 425–544 form a domain IV, binds dsDNA region; that stretch reads KFHGREITIE…LHVLEQTLKG (120 aa).

Belongs to the DnaA family. Oligomerizes as a right-handed, spiral filament on DNA at oriC.

The protein resides in the cytoplasm. Functionally, plays an essential role in the initiation and regulation of chromosomal replication. ATP-DnaA binds to the origin of replication (oriC) to initiate formation of the DNA replication initiation complex once per cell cycle. Binds the DnaA box (a 9 base pair repeat at the origin) and separates the double-stranded (ds)DNA. Forms a right-handed helical filament on oriC DNA; dsDNA binds to the exterior of the filament while single-stranded (ss)DNA is stabiized in the filament's interior. The ATP-DnaA-oriC complex binds and stabilizes one strand of the AT-rich DNA unwinding element (DUE), permitting loading of DNA polymerase. After initiation quickly degrades to an ADP-DnaA complex that is not apt for DNA replication. Binds acidic phospholipids. In Paraburkholderia xenovorans (strain LB400), this protein is Chromosomal replication initiator protein DnaA.